A 309-amino-acid chain; its full sequence is Taste receptor type 2 member 20 (309 aa).

The Extracellular segment spans residues 1–6 (MMSFLH). Residues 7–27 (IVFSILVVVAFILGNFANGFI) traverse the membrane as a helical segment. Residues 28–46 (ALINFIAWVKRQKISSADQ) are Cytoplasmic-facing. Residues 47-67 (IIAALAVSRVGLLWVILLHWY) form a helical membrane-spanning segment. Over 68–79 (STVLNPTSSNLK) the chain is Extracellular. Residues 80–100 (VIIFISNAWAVTNHFSIWLAT) traverse the membrane as a helical segment. Residues 101 to 125 (SLSIFYLLKIVNFSRLIFHHLKRKA) lie on the Cytoplasmic side of the membrane. Residues 126–146 (KSVVLVIVLGSLFFLVCHLVM) form a helical membrane-spanning segment. Residues 147–178 (KHTYINVWTEECEGNVTWKIKLRNAMHLSNLT) are Extracellular-facing. N-linked (GlcNAc...) asparagine glycosylation is found at N161 and N176. Residues 179-199 (VAMLANLIPFTLTLISFLLLI) traverse the membrane as a helical segment. Residues 200–229 (YSLCKHLKKMQLHGKGSQDPSTKIHIKALQ) lie on the Cytoplasmic side of the membrane. Residues 230-250 (TVTSFLILLAIYFLCLIISFW) traverse the membrane as a helical segment. The Extracellular segment spans residues 251 to 259 (NFKMRPKEI). Residues 260 to 280 (VLMLCQAFGIIYPSFHSFILI) form a helical membrane-spanning segment. Residues 281–309 (WGNKTLKQTFLSVLWQVTCWAKGQNQSTP) are Cytoplasmic-facing.

This sequence belongs to the G-protein coupled receptor T2R family. As to expression, expressed in subsets of taste receptor cells of the tongue and exclusively in gustducin-positive cells.

The protein resides in the membrane. Receptor that may play a role in the perception of bitterness and is gustducin-linked. May play a role in sensing the chemical composition of the gastrointestinal content. The activity of this receptor may stimulate alpha gustducin, mediate PLC-beta-2 activation and lead to the gating of TRPM5. In Homo sapiens (Human), this protein is Taste receptor type 2 member 20 (TAS2R20).